The sequence spans 314 residues: Nitrilase 2 (314 aa).

Positions 7 to 269 (VTLGVAQAAP…ETLITARVST (263 aa)) constitute a CN hydrolase domain. The Proton acceptor role is filled by Glu-47. Catalysis depends on Lys-132, which acts as the Proton donor. Cys-166 (nucleophile) is an active-site residue.

This sequence belongs to the carbon-nitrogen hydrolase superfamily. Nitrilase family.

The catalysed reaction is a nitrile + 2 H2O = a carboxylate + NH4(+). In terms of biological role, nitrilases catalyze the mild hydrolytic conversion of organonitriles directly to the corresponding carboxylic acids. Catalyzes the production of aryllactic acid derivatives. Mediates the hydrolysis of cyanohydrin to (S)-phenyllactic acid. In Unknown prokaryotic organism, this protein is Nitrilase 2.